Consider the following 260-residue polypeptide: Serine/threonine-protein acetyltransferase NGR_a02610 (260 aa).

Active-site residues include H123 and E143. H123 is a CoA binding site. 180 to 181 (KS) provides a ligand contact to CoA. C185 is a catalytic residue.

Belongs to the acetyltransferase YopJ family.

It carries out the reaction L-threonyl-[protein] + acetyl-CoA = O-acetyl-L-threonyl-[protein] + CoA. The catalysed reaction is L-seryl-[protein] + acetyl-CoA = O-acetyl-L-seryl-[protein] + CoA. Its function is as follows. Serine/threonine-protein acetyltransferase translocated into infected cells, which mediates acetylation of serine and threonine residues of host target proteins. In Sinorhizobium fredii (strain NBRC 101917 / NGR234), this protein is Serine/threonine-protein acetyltransferase NGR_a02610.